The sequence spans 418 residues: Putative ion-transport protein YfeO (418 aa).

The next 12 helical transmembrane spans lie at 10 to 30 (LLLS…LIMV), 54 to 74 (DSPL…GLVI), 99 to 119 (ALPG…SLGP), 120 to 140 (EHPI…RLLP), 149 to 169 (ILAS…AALI), 186 to 206 (LFAP…FFHP), 223 to 243 (ILSG…AVWC), 258 to 278 (VFVL…GGPV), 300 to 320 (DYFL…ASGF), 322 to 342 (GGRI…LHEH), 343 to 363 (VPAV…VLVV), and 371 to 391 (LFMA…CIVM).

Belongs to the chloride channel (TC 2.A.49) family.

The protein localises to the cell membrane. The polypeptide is Putative ion-transport protein YfeO (Escherichia coli O45:K1 (strain S88 / ExPEC)).